A 433-amino-acid chain; its full sequence is Protein CLP1 homolog (433 aa).

Residues Glu-22, Arg-61, and 128-133 (DVGKTT) each bind ATP.

Belongs to the Clp1 family. Clp1 subfamily.

It localises to the nucleus. Required for endonucleolytic cleavage during polyadenylation-dependent pre-mRNA 3'-end formation. This is Protein CLP1 homolog from Brugia malayi (Filarial nematode worm).